Reading from the N-terminus, the 145-residue chain is Beta sliding clamp (145 aa).

This sequence belongs to the beta sliding clamp family. As to quaternary structure, forms a ring-shaped head-to-tail homodimer around DNA which binds and tethers DNA polymerases and other proteins to the DNA. The DNA replisome complex has a single clamp-loading complex (3 tau and 1 each of delta, delta', psi and chi subunits) which binds 3 Pol III cores (1 core on the leading strand and 2 on the lagging strand) each with a beta sliding clamp dimer. Additional proteins in the replisome are other copies of gamma, psi and chi, Ssb, DNA helicase and RNA primase.

The protein resides in the cytoplasm. In terms of biological role, confers DNA tethering and processivity to DNA polymerases and other proteins. Acts as a clamp, forming a ring around DNA (a reaction catalyzed by the clamp-loading complex) which diffuses in an ATP-independent manner freely and bidirectionally along dsDNA. Initially characterized for its ability to contact the catalytic subunit of DNA polymerase III (Pol III), a complex, multichain enzyme responsible for most of the replicative synthesis in bacteria; Pol III exhibits 3'-5' exonuclease proofreading activity. The beta chain is required for initiation of replication as well as for processivity of DNA replication. In Vibrio harveyi (Beneckea harveyi), this protein is Beta sliding clamp (dnaN).